We begin with the raw amino-acid sequence, 371 residues long: Monomethylxanthine methyltransferase 2 (371 aa).

Y18, C61, N66, D100, L101, S139, F140, and C156 together coordinate S-adenosyl-L-homocysteine. Positions 157, 160, and 161 each coordinate theobromine. Residues N178, D260, F262, and N263 each coordinate Mg(2+). A theobromine-binding site is contributed by Y355.

It belongs to the methyltransferase superfamily. Type-7 methyltransferase family. The cofactor is Mg(2+).

It catalyses the reaction 7-methylxanthine + S-adenosyl-L-methionine = theobromine + S-adenosyl-L-homocysteine + H(+). Its pathway is alkaloid biosynthesis. Its function is as follows. Involved in the biosynthesis of caffeine. Catalyzes the conversion of 7-methylxanthine (7mX) to theobromine and with a lower activity of paraxanthine to caffeine. The protein is Monomethylxanthine methyltransferase 2 of Coffea canephora (Robusta coffee).